The chain runs to 351 residues: MASPSTDRLHLIEYLQDPGNPDGESRERLIEACQDVIASLERPIETARKQAFLTLDHAVIRSAIKLNLFKALDKEDRPYSTQELALATTPQCNHVLLSRLLRYLATRPLRLVIETSAGFWQRTARGSVFAQDSFKSGCSMYFDACGPAFQALPTWICTPDHERLHSPFQVAYPGQGSFFKRLQEDDSMLQTFQCWMETVSRHQFCAQETIDFNEWIPDGTSDSDVVFVDVGGGTGDQAIALGYKRIGLPGRIINQDLLPISQEAEEMLRSHNIERITYNFFDEQPLKGACVYHYRQIFHDWPDADCERILRRAKDSMTASSTLLIDEVVLPETGAHWMNDHKYNGVACYST.

S-adenosyl-L-methionine-binding positions include 231–232 (GG), 279–280 (NF), and R295. The active-site Proton acceptor is H299.

It belongs to the class I-like SAM-binding methyltransferase superfamily. Cation-independent O-methyltransferase family.

It functions in the pathway secondary metabolite biosynthesis. O-methyltransferase; part of the gene cluster that mediates the biosynthesis of the cyclic tetrapeptide apicidin F (APF). The non-ribosomal peptide synthetase apf1 incorporates four different amino acids to produce apicidin F: L-phenylalanine, D-pipecolic acid (D-pip), N-methoxy-L-tryptophan and L-2-aminooctanedioic acid. L-Phenylalanine is the only proteinogenic amino acid directly used by apf1. The 3 other apf1 substrates are non-proteinogenic and have to be modified by other enzymes of the cluster. Lysine is converted to delta-1-pyrroline-5-carboxylate (P5C) which is reduced to L-pipecolic acid (L-pip) by apf3. L-pip is epimerized to D-pip, probably by apf1 activity, prior to incorporation. L-Tryptophan is N-oxidyzed by one of the cytochrome P450 monooxygenases (apf7 or apf8), and further methylated at the hydroxy group by the O-methyltransferase apf6 to yield N-methoxy-L-tryptophan. The synthesis of the fourth apf1 substrate is more complex. The fatty acid synthase apf5 is involved in the synthesis of the octanoic acid backbone of L-2-aminooctanedioic acid by fixing one acetyl-CoA unit and three malonyl-CoA units. Then one of the cytochrome P450 monooxygenases (apf7 or apf8) may oxidize this backbone to 2-oxooctanoic acid. The aminotransferase apf4 is predicted to catalyze the exchange of the keto group with an amino group. The next step would be the oxidation of 2-aminooctanoic acid by one of the cytochrome P450 monooxygenases (apf7 or apf8). The last step is the oxidation of 2-amino-8-hydroxyoctanoic acid to 2-aminooctanedioic acid is catalyzed by the FAD-dependent monooxygenase apf9. The sequence is that of O-methyltransferase apf6 from Gibberella fujikuroi (strain CBS 195.34 / IMI 58289 / NRRL A-6831) (Bakanae and foot rot disease fungus).